Consider the following 374-residue polypeptide: Lactoyl-CoA dehydratase subunit beta (374 aa).

The protein belongs to the FldB/FldC dehydratase alpha/beta subunit family. As to quaternary structure, heterodimer of an alpha (LcdA) and a beta (LcdB) subunit. The cofactor is [4Fe-4S] cluster. FMN serves as cofactor. Riboflavin is required as a cofactor. Requires Mg(2+) as cofactor.

The catalysed reaction is (R)-lactoyl-CoA = acryloyl-CoA + H2O. It catalyses the reaction (2R)-hydroxybutanoyl-CoA = (2E)-butenoyl-CoA + H2O. With respect to regulation, activated by the LcdC protein. Functionally, involved in the acrylate pathway for the conversion of D-lactic acid to propionic acid. Catalyzes the reversible dehydration of Lactoyl-CoA and 2-hydroxybutyroyl-CoA to acryloyl-CoA and crotonyl-CoA, respectively. The chain is Lactoyl-CoA dehydratase subunit beta (lcdB) from Anaerotignum propionicum (Clostridium propionicum).